A 206-amino-acid polypeptide reads, in one-letter code: Large ribosomal subunit protein uL4 (206 aa).

The tract at residues 63–96 (MYKQKGTGRARHHSARAPQFRGGGKAHGPVVRSH) is disordered. The segment covering 64 to 77 (YKQKGTGRARHHSA) has biased composition (basic residues).

This sequence belongs to the universal ribosomal protein uL4 family. As to quaternary structure, part of the 50S ribosomal subunit.

One of the primary rRNA binding proteins, this protein initially binds near the 5'-end of the 23S rRNA. It is important during the early stages of 50S assembly. It makes multiple contacts with different domains of the 23S rRNA in the assembled 50S subunit and ribosome. Functionally, forms part of the polypeptide exit tunnel. In Allorhizobium ampelinum (strain ATCC BAA-846 / DSM 112012 / S4) (Agrobacterium vitis (strain S4)), this protein is Large ribosomal subunit protein uL4.